A 38-amino-acid chain; its full sequence is Large ribosomal subunit protein bL36 (38 aa).

The protein belongs to the bacterial ribosomal protein bL36 family.

The polypeptide is Large ribosomal subunit protein bL36 (Cupriavidus metallidurans (strain ATCC 43123 / DSM 2839 / NBRC 102507 / CH34) (Ralstonia metallidurans)).